The sequence spans 137 residues: Kunitz-type trypsin inhibitor alpha chain (137 aa).

A disulfide bridge connects residues Cys40 and Cys86.

It belongs to the protease inhibitor I3 (leguminous Kunitz-type inhibitor) family. In terms of assembly, heterodimer of an alpha and a beta chain linked by a disulfide bond.

Its function is as follows. Inhibition of trypsin. This chain is Kunitz-type trypsin inhibitor alpha chain, found in Neltuma juliflora (Mesquite).